A 210-amino-acid chain; its full sequence is Silenced mating-type protein ALPHA2 (210 aa).

Methionine 1 is subject to N-acetylmethionine. The interval 1–102 (MNKIPIKDLL…RSIENDRSNY (102 aa)) is N-terminal domain. A flexible linker region spans residues 103–128 (QLTQKNKSADGLVFNVVTQDMINKST). Residues 129–191 (KPYRGHRFTK…NRRRKEKTIT (63 aa)) constitute a DNA-binding region (homeobox; TALE-type). The tract at residues 190–210 (ITIAPELADLLSGEPLAKKKE) is C-terminal tail.

The protein belongs to the TALE/M-ATYP homeobox family.

The protein resides in the nucleus. Functionally, mating type proteins are sequence specific DNA-binding proteins that act as master switches in yeast differentiation by controlling gene expression in a cell type-specific fashion. Silenced copy of ALPHA2 at HML. The polypeptide is Silenced mating-type protein ALPHA2 (HMLALPHA2) (Saccharomyces cerevisiae (strain ATCC 204508 / S288c) (Baker's yeast)).